We begin with the raw amino-acid sequence, 426 residues long: Tol-Pal system protein TolB (426 aa).

Positions 1–24 (MKLKSRFTSIIGVITLFFSQTVTA) are cleaved as a signal peptide.

This sequence belongs to the TolB family. As to quaternary structure, the Tol-Pal system is composed of five core proteins: the inner membrane proteins TolA, TolQ and TolR, the periplasmic protein TolB and the outer membrane protein Pal. They form a network linking the inner and outer membranes and the peptidoglycan layer.

The protein localises to the periplasm. Functionally, part of the Tol-Pal system, which plays a role in outer membrane invagination during cell division and is important for maintaining outer membrane integrity. In Actinobacillus pleuropneumoniae serotype 5b (strain L20), this protein is Tol-Pal system protein TolB.